The sequence spans 530 residues: MEPRAVADALETGEEDVVMEALRAYNRENSQSFTFDDAQQEDRKRLAKLLVSVLEQGLPPSRRVIWLQSIRILSRDRSCLDSFTSRRSLQALACYAGISASQGSVPEPLNMDVVLESLKCLCNLVLSSPVAQALAAEAGLVVRLAERVGLCRQSSFPHDVQFFDLRLLFLLTALRTDVRQQLFQELQGVRLLTRALELTLGMTEGERHPELLPPQETERAMEILKVLFNITFDSIKREVDEEDAALYRHLGTLLRHCVMLAAAGDRTEELHGHAVNLLGNLPVKCLDVLLTLEPHEGSLEFLGVNMDVIRVLLSFMEKRLHQTHRLKESVAPVLSVLTECARMHRPARKFLKAQVLPPLRDVRTRPEVGELLRNKLVRLMTHLDTDVKRVAAEFLFVLCSESVPRFIKYTGYGNAAGLLAARGLMAGGRPEGQYSEDEDTDTDEYKEAKASINPVTGRVEEKPPNPMEGMTEEQKEHEAMKLVNMFDKLSRHRVIQPMGMSPRGQLTSLQDAMCETMEGQLSSDPDSDPD.

Phosphoserine is present on Ser435. Residues Thr440 and Thr442 each carry the phosphothreonine modification. Phosphoserine is present on residues Ser501, Ser522, Ser523, and Ser527.

Belongs to the synembryn family. Interacts with GDP-bound G alpha proteins GNAI1, GNAO1 and GNAQ, and with GNA13 with lower affinity. Does not interact with G-alpha proteins when they are in complex with subunits beta and gamma. Interacts (via C-terminus) with RGS14; the interaction stimulates the dissociation of the complex between RGS14 and the active GTP-bound form of GNAI1. Interacts with NCS1; interaction is favored in the absence of Ca(2+) and myristoylation of NCS1 is not required. In terms of processing, phosphorylated at Ser-435 and Thr-440 by CK2, stabilizing its interface with G alpha proteins.

Its subcellular location is the cytoplasm. The protein resides in the cell cortex. Functionally, chaperone that specifically binds and folds nascent G alpha proteins prior to G protein heterotrimer formation, promoting their stability and activity: folds GNAI1, GNAO1, GNA13 and GNAQ. Does not fold G(s) G-alpha proteins GNAS nor GNAL. Also acts as a guanine nucleotide exchange factor (GEF) for G alpha proteins by stimulating exchange of bound GDP for free GTP. Involved in regulation of microtubule pulling forces during mitotic movement of chromosomes by stimulating G(i)-alpha protein (GNAI1), possibly leading to release G(i)-alpha-GTP and NuMA proteins from the NuMA-GPSM2-G(i)-alpha-GDP complex. Also acts as an activator for G(q)-alpha (GNAQ) protein by enhancing the G(q)-coupled receptor-mediated ERK activation. This chain is Chaperone Ric-8A (RIC8A), found in Bos taurus (Bovine).